Consider the following 178-residue polypeptide: Peptide deformylase (178 aa).

2 residues coordinate Fe cation: Cys-96 and His-138. Glu-139 is a catalytic residue. His-142 is a binding site for Fe cation.

Belongs to the polypeptide deformylase family. Fe(2+) serves as cofactor.

It catalyses the reaction N-terminal N-formyl-L-methionyl-[peptide] + H2O = N-terminal L-methionyl-[peptide] + formate. In terms of biological role, removes the formyl group from the N-terminal Met of newly synthesized proteins. Requires at least a dipeptide for an efficient rate of reaction. N-terminal L-methionine is a prerequisite for activity but the enzyme has broad specificity at other positions. This chain is Peptide deformylase, found in Bartonella tribocorum (strain CIP 105476 / IBS 506).